The following is a 673-amino-acid chain: MPSLRTRREEAEMELSAPGPSPWTPAPQARVSDAPAVTHPGSAACGTPCCSDTELEAICPHYQQPDCDTRTEDKEFLHKEDIHEDLESQAEISENYAGDVFQVPKLGDLCDDVSERDWGVPEGRRLPQSLSQEGDFTPAAMGLLRGPLGEKDLDCNGFDSCFSLSPNLMACQEIPTEERPHPYDMGGQSFQHSVDLTGHEGVPTAESPLICNECGKTFRGNPDLIQRQIVHTGEASFMCDDCGKTFSQNSVLKNRHXSHMSEKAFRGHSDFSRHQSHHSSERPYTCTECGKAFSQNSSLKKHQKSHMSEKPYECNECGKAFRRSSNLIQHQRIHSGEKPYVCSECGKAFRRSSNLIKHHRTHTGEKPFECGECGKAFSQSAHLRKHQRVHTGEKPYECNDCGKPFSRVSNLIKHHRVHTGEKPYKCSDCGKAFSQSSSLIQHRRIHTGEKPHVCNVCGKAFSYSSVLRKHQIIHTGEKPYRCSVCGKAFSHSSALIQHQGVHTGDKPYACHECGKTFGRSSNLILHQRVHTGEKPYECTECGKTFSQSSTLIQHQRIHNGLKPHECNQCGKAFNRSSNLIHHQKVHTGEKPYTCVECGKGFSQSSHLIQHQIIHTGERPYKCSECGKAFSQRSVLIQHQRIHTGVKPYDCAACGKAFSQRSKLIKHQLIHTRE.

Residues 1 to 10 (MPSLRTRREE) show a composition bias toward basic and acidic residues. Positions 1 to 42 (MPSLRTRREEAEMELSAPGPSPWTPAPQARVSDAPAVTHPGS) are disordered. The tract at residues 62–210 (YQQPDCDTRT…GVPTAESPLI (149 aa)) is necessary for transcription activation. The C2H2-type 1; degenerate zinc-finger motif lies at 209–231 (LICNECGKTFRGNPDLIQRQIVH). The C2H2-type 2; degenerate zinc finger occupies 237 to 259 (FMCDDCGKTFSQNSVLKNRHXSH). Residue lysine 253 forms a Glycyl lysine isopeptide (Lys-Gly) (interchain with G-Cter in SUMO2) linkage. 7 C2H2-type zinc fingers span residues 284 to 306 (YTCT…QKSH), 312 to 334 (YECN…QRIH), 340 to 362 (YVCS…HRTH), 368 to 390 (FECG…QRVH), 396 to 418 (YECN…HRVH), 424 to 446 (YKCS…RRIH), and 452 to 474 (HVCN…QIIH). The segment at 332-364 (RIHSGEKPYVCSECGKAFRRSSNLIKHHRTHTG) is required for nuclear localization. A required for nuclear localization region spans residues 464-494 (SSVLRKHQIIHTGEKPYRCSVCGKAFSHSSA). An N6-acetyllysine modification is found at lysine 478. 7 consecutive C2H2-type zinc fingers follow at residues 480–502 (YRCS…QGVH), 508–530 (YACH…QRVH), 536–558 (YECT…QRIH), 564–586 (HECN…QKVH), 592–614 (YTCV…QIIH), 620–642 (YKCS…QRIH), and 648–670 (YDCA…QLIH).

The protein belongs to the krueppel C2H2-type zinc-finger protein family. As to quaternary structure, interacts with INCA1; the interaction inhibits INCA1 activity and induces the cell cycle process.

The protein resides in the nucleus. Acts as a transcriptional activator. Promotes cell proliferation by facilitating the cell cycle phase transition from the S to G2/M phase. Involved in both the hemin- and phorbol myristate acetate (PMA)-induced erythroid and megakaryocytic differentiation, respectively. Also plays a role as an inhibitor of cell apoptosis. This chain is Zinc finger protein 16 (ZNF16), found in Pan paniscus (Pygmy chimpanzee).